Consider the following 706-residue polypeptide: Protein argonaute (706 aa).

Residues 1–108 (MGKEALLNLY…ELFRDFLTKT (108 aa)) form an N-terminal domain region. The linker L1 stretch occupies residues 109-165 (KVKDKFISDFYKKFRDKITVQGKNRKIALIPEVNEKVLKSEEGYFLLHLDLKFRIQP). The PAZ domain maps to 168–259 (TLQTLLERND…YPATILKPVL (92 aa)). The segment at 263-334 (NLEDEERNEV…AKGKNTKVIT (72 aa)) is linker L2. The mid domain stretch occupies residues 335–448 (NLRKFLELCR…YDFVKRELLK (114 aa)). In terms of domain architecture, Piwi spans 419-694 (LVIVFLEEYP…ITKLMLRGIE (276 aa)). Residues 449-706 (KMIPSQVILN…KKEGDIMYWL (258 aa)) form a PIWI domain region. Residues aspartate 502, glutamate 541, and aspartate 571 contribute to the active site. Aspartate 502 contacts Mn(2+). Aspartate 571 contributes to the Mn(2+) binding site. Residues 612–650 (FIKGYFYKLSEDSVILATYNQVYEGTHQPIKVRKVYGEL) form a PIWI box region. Residue aspartate 683 is part of the active site. Residue aspartate 683 participates in Mn(2+) binding.

This sequence belongs to the argonaute family. Long pAgo subfamily. It depends on Mg(2+) as a cofactor.

Functionally, a DNA-guided RNA endonuclease. Uses short ssDNA sequences as guides (gDNA) to bind complementary target strands, resulting in cleavage of the target RNA. The cleavage site is 10 nucleotides downstream of the residue base paired with the 5'-end of the gDNA. Binds ssDNA better than ssRNA, binds dsDNA and DNA-RNA hybrids but does not bind dsRNA. A 2 nucleotide 3'-overhang (possibly on the guide strand) may help load nucleic acids into the complex. This chain is Protein argonaute, found in Aquifex aeolicus (strain VF5).